Here is a 377-residue protein sequence, read N- to C-terminus: MSNIAKGLEGVLFTESKLTFINGSEGILTHLGIPIQEWAEKSTFEELSLALLDAKLPTAEELAKFDAELKANRAIPDQLVGIIRDMPKGVHPMQALRTAVSYLGLLDPQAEDITPEARRAISTRMIAQFSTIIAAINRAQEGQDIVAPRADLTHAGNFLYMLTGNEPTPEQARLFDIALVLHADHGMNASTFTAIATSSTLSDMYSCMVSAIGALKGPLHGGANEAVMTMLDEIGTVDKAEAYITGKLDNKEKIMGVGHRVYKYFDPRSRVLRDYAEHVANKEGKSNYYQILEAIEKIIVDRMGAKGIYPNVDFYSGTVYSDLGIKKEYFTPIFALARISGWCASVIEYSQDNRLLRPDAEYTGARDQHYVDIKDRQ.

Active-site residues include histidine 220, histidine 259, and aspartate 313.

The protein belongs to the citrate synthase family. Homodimer.

It carries out the reaction oxaloacetate + acetyl-CoA + H2O = citrate + CoA + H(+). It functions in the pathway carbohydrate metabolism; tricarboxylic acid cycle; isocitrate from oxaloacetate: step 1/2. Functionally, might regulate the synthesis and function of enzymes involved in later enzymatic steps of Krebs cycle. Loss in activity results in sporulation defect. This chain is Citrate synthase (gltA), found in Deinococcus radiodurans (strain ATCC 13939 / DSM 20539 / JCM 16871 / CCUG 27074 / LMG 4051 / NBRC 15346 / NCIMB 9279 / VKM B-1422 / R1).